Consider the following 233-residue polypeptide: V-type proton ATPase subunit E (233 aa).

This sequence belongs to the V-ATPase E subunit family. In terms of assembly, V-ATPase is a heteromultimeric enzyme composed of a peripheral catalytic V1 complex (components A to H) attached to an integral membrane V0 proton pore complex (components: a, c, c', c'' and d).

In terms of biological role, subunit of the peripheral V1 complex of vacuolar ATPase essential for assembly or catalytic function. V-ATPase is responsible for acidifying a variety of intracellular compartments in eukaryotic cells. This chain is V-type proton ATPase subunit E (vatE), found in Dictyostelium discoideum (Social amoeba).